The following is a 333-amino-acid chain: Transcription initiation factor IIB (333 aa).

The segment at 33-64 (EIYRCPICGNDRFVYNYERGEVVCIVCGAVVQ) adopts a TFIIB-type zinc-finger fold. 4 residues coordinate Zn(2+): cysteine 37, cysteine 40, cysteine 56, and cysteine 59. Repeat copies occupy residues 149-232 (QELE…LREL) and 243-324 (LYIS…ELAK).

Belongs to the TFIIB family.

Functionally, stabilizes TBP binding to an archaeal box-A promoter. Also responsible for recruiting RNA polymerase II to the pre-initiation complex (DNA-TBP-TFIIB). The polypeptide is Transcription initiation factor IIB (Pyrobaculum arsenaticum (strain DSM 13514 / JCM 11321 / PZ6)).